Reading from the N-terminus, the 140-residue chain is Putative pre-16S rRNA nuclease (140 aa).

The protein belongs to the YqgF nuclease family.

It localises to the cytoplasm. Functionally, could be a nuclease involved in processing of the 5'-end of pre-16S rRNA. This chain is Putative pre-16S rRNA nuclease, found in Halalkalibacterium halodurans (strain ATCC BAA-125 / DSM 18197 / FERM 7344 / JCM 9153 / C-125) (Bacillus halodurans).